The primary structure comprises 199 residues: MFRLLKRACSFLLLFVIYQSFVIHHNVQRVLAYKPMVEKTLAENDTKANVDLVLAMIYTETKGGEADVMQSSESSSGQKNSITDSQASIEHGVNLLSHNLALAEEAGVDSWTAVQAYNFGTAYIDYIAKHGSQNTVDLATTYSKTVVAPSLGNTSGQTYFYYHPLALISGGKLYKNGGNIYYSREVHFNLYLIELMSLF.

The protein localises to the cell surface. The protein is Pneumococcal vaccine antigen A homolog (pvaA) of Streptococcus pyogenes serotype M3 (strain ATCC BAA-595 / MGAS315).